Consider the following 488-residue polypeptide: Tocopherol cyclase, chloroplastic (488 aa).

The N-terminal 76 residues, 1–76, are a transit peptide targeting the chloroplast; it reads MEIRSLIVSM…VPTSPNRELR (76 aa).

The protein resides in the plastid. The protein localises to the chloroplast. It is found in the plastoglobule. It carries out the reaction delta-tocopherol = 2-methyl-6-phytyl-1,4-benzene-1,4-diol. The catalysed reaction is gamma-tocopherol = 2,3-dimethyl-6-phytylbenzene-1,4-diol. The enzyme catalyses delta-tocotrienol = 6-geranylgeranyl-2-methylbenzene-1,4-diol. It catalyses the reaction gamma-tocotrienol = 6-geranylgeranyl-2,3-dimethylbenzene-1,4-diol. Its pathway is cofactor biosynthesis; tocopherol biosynthesis. In terms of biological role, involved in the synthesis of both tocopherols and tocotrienols (vitamin E), which presumably protect photosynthetic complexes from oxidative stress. Catalyzes the conversion of 2-methyl-6-phytyl-1,4-hydroquinone and 2,3-dimethyl-5-phytyl-1,4-hydroquinone (DMPQ) to delta- and gamma-tocopherol respectively. Also converts 2,3-dimethyl-5-geranylgeranyl-1,4-hydroquinone (DMGQ) to gamma-tocotrienol. The protein is Tocopherol cyclase, chloroplastic (VTE1) of Arabidopsis thaliana (Mouse-ear cress).